Here is a 472-residue protein sequence, read N- to C-terminus: Adenosylhomocysteinase (472 aa).

3 residues coordinate substrate: T61, D136, and E196. NAD(+) is bound at residue 197-199 (TTT). The substrate site is built by K226 and D230. NAD(+)-binding positions include N231, 260–265 (GYGDVG), E283, N318, 339–341 (IGH), and N384.

Belongs to the adenosylhomocysteinase family. NAD(+) serves as cofactor.

It is found in the cytoplasm. The catalysed reaction is S-adenosyl-L-homocysteine + H2O = L-homocysteine + adenosine. The protein operates within amino-acid biosynthesis; L-homocysteine biosynthesis; L-homocysteine from S-adenosyl-L-homocysteine: step 1/1. In terms of biological role, may play a key role in the regulation of the intracellular concentration of adenosylhomocysteine. The protein is Adenosylhomocysteinase of Cupriavidus metallidurans (strain ATCC 43123 / DSM 2839 / NBRC 102507 / CH34) (Ralstonia metallidurans).